Consider the following 240-residue polypeptide: MAAPFALVSRVSPAARLPIRAAWRRARPTVGLPSSGRARQLAVASAAQENRDNTAVDVHVNQDGGNQQGNAVQRRPRRSSALDGISPFGLVDPMSPMRTMRQMLDTMDRIFDDVALGFPATPRRSLATGEVRMPWDVMEDDKEVRMRFDMPGLSREEVKVMVEDDALVIRGEHKKEEGEGAEGSGDGWWKERSVSSYDMRLALPDECDKSKVRAELKNGVLLVTVPKTEVERKVIDVQVQ.

Residues 1-43 (MAAPFALVSRVSPAARLPIRAAWRRARPTVGLPSSGRARQLAV) constitute a chloroplast transit peptide. Residues 59-84 (HVNQDGGNQQGNAVQRRPRRSSALDG) are disordered. The sHSP domain occupies 126-240 (LATGEVRMPW…ERKVIDVQVQ (115 aa)).

This sequence belongs to the small heat shock protein (HSP20) family. In terms of assembly, may form oligomeric structures. In terms of tissue distribution, expressed in roots, stems, leaves, spikelets and embryos.

It is found in the plastid. It localises to the chloroplast. The sequence is that of 26.7 kDa heat shock protein, chloroplastic (HSP26.7) from Oryza sativa subsp. japonica (Rice).